The sequence spans 242 residues: Glucosamine-6-phosphate deaminase (242 aa).

The active-site Proton acceptor; for enolization step is D67. The For ring-opening step role is filled by N136. The active-site Proton acceptor; for ring-opening step is H138. E143 serves as the catalytic For ring-opening step.

The protein belongs to the glucosamine/galactosamine-6-phosphate isomerase family. NagB subfamily.

The enzyme catalyses alpha-D-glucosamine 6-phosphate + H2O = beta-D-fructose 6-phosphate + NH4(+). It participates in amino-sugar metabolism; N-acetylneuraminate degradation; D-fructose 6-phosphate from N-acetylneuraminate: step 5/5. Its function is as follows. Catalyzes the reversible isomerization-deamination of glucosamine 6-phosphate (GlcN6P) to form fructose 6-phosphate (Fru6P) and ammonium ion. The chain is Glucosamine-6-phosphate deaminase from Alkaliphilus metalliredigens (strain QYMF).